A 238-amino-acid polypeptide reads, in one-letter code: Pyridoxine 5'-phosphate synthase (238 aa).

Residue asparagine 7 coordinates 3-amino-2-oxopropyl phosphate. 9-10 (DH) provides a ligand contact to 1-deoxy-D-xylulose 5-phosphate. A 3-amino-2-oxopropyl phosphate-binding site is contributed by arginine 18. Histidine 43 acts as the Proton acceptor in catalysis. 1-deoxy-D-xylulose 5-phosphate-binding residues include arginine 45 and histidine 50. The active-site Proton acceptor is glutamate 70. Threonine 100 is a 1-deoxy-D-xylulose 5-phosphate binding site. Histidine 190 (proton donor) is an active-site residue. 3-amino-2-oxopropyl phosphate-binding positions include glycine 191 and 212–213 (GH).

It belongs to the PNP synthase family. As to quaternary structure, homooctamer; tetramer of dimers.

The protein resides in the cytoplasm. It carries out the reaction 3-amino-2-oxopropyl phosphate + 1-deoxy-D-xylulose 5-phosphate = pyridoxine 5'-phosphate + phosphate + 2 H2O + H(+). It participates in cofactor biosynthesis; pyridoxine 5'-phosphate biosynthesis; pyridoxine 5'-phosphate from D-erythrose 4-phosphate: step 5/5. In terms of biological role, catalyzes the complicated ring closure reaction between the two acyclic compounds 1-deoxy-D-xylulose-5-phosphate (DXP) and 3-amino-2-oxopropyl phosphate (1-amino-acetone-3-phosphate or AAP) to form pyridoxine 5'-phosphate (PNP) and inorganic phosphate. In Prochlorococcus marinus (strain MIT 9312), this protein is Pyridoxine 5'-phosphate synthase.